The following is a 292-amino-acid chain: Bifunctional protein FolD (292 aa).

NADP(+) is bound by residues G171–S173, I196, and I237.

This sequence belongs to the tetrahydrofolate dehydrogenase/cyclohydrolase family. As to quaternary structure, homodimer.

The catalysed reaction is (6R)-5,10-methylene-5,6,7,8-tetrahydrofolate + NADP(+) = (6R)-5,10-methenyltetrahydrofolate + NADPH. It carries out the reaction (6R)-5,10-methenyltetrahydrofolate + H2O = (6R)-10-formyltetrahydrofolate + H(+). The protein operates within one-carbon metabolism; tetrahydrofolate interconversion. Functionally, catalyzes the oxidation of 5,10-methylenetetrahydrofolate to 5,10-methenyltetrahydrofolate and then the hydrolysis of 5,10-methenyltetrahydrofolate to 10-formyltetrahydrofolate. This Helicobacter acinonychis (strain Sheeba) protein is Bifunctional protein FolD.